A 132-amino-acid chain; its full sequence is Small ribosomal subunit protein uS8 (132 aa).

Belongs to the universal ribosomal protein uS8 family. As to quaternary structure, part of the 30S ribosomal subunit. Contacts proteins S5 and S12.

One of the primary rRNA binding proteins, it binds directly to 16S rRNA central domain where it helps coordinate assembly of the platform of the 30S subunit. This is Small ribosomal subunit protein uS8 from Methylocella silvestris (strain DSM 15510 / CIP 108128 / LMG 27833 / NCIMB 13906 / BL2).